The sequence spans 190 residues: Holliday junction branch migration complex subunit RuvA (190 aa).

The segment at 1–64 is domain I; sequence MIGRITGTLI…EDAHLLYGFG (64 aa). A domain II region spans residues 65–137; the sequence is TASERAAFRE…MRGKLGADIG (73 aa). Residues 137–141 form a flexible linker region; that stretch reads GATPH. Residues 142–190 are domain III; that stretch reads AVPDSQSDILNALLALGYSEKESLAALKTLPEGLGVSDGIRQALKALAR.

Belongs to the RuvA family. As to quaternary structure, homotetramer. Forms an RuvA(8)-RuvB(12)-Holliday junction (HJ) complex. HJ DNA is sandwiched between 2 RuvA tetramers; dsDNA enters through RuvA and exits via RuvB. An RuvB hexamer assembles on each DNA strand where it exits the tetramer. Each RuvB hexamer is contacted by two RuvA subunits (via domain III) on 2 adjacent RuvB subunits; this complex drives branch migration. In the full resolvosome a probable DNA-RuvA(4)-RuvB(12)-RuvC(2) complex forms which resolves the HJ.

It localises to the cytoplasm. In terms of biological role, the RuvA-RuvB-RuvC complex processes Holliday junction (HJ) DNA during genetic recombination and DNA repair, while the RuvA-RuvB complex plays an important role in the rescue of blocked DNA replication forks via replication fork reversal (RFR). RuvA specifically binds to HJ cruciform DNA, conferring on it an open structure. The RuvB hexamer acts as an ATP-dependent pump, pulling dsDNA into and through the RuvAB complex. HJ branch migration allows RuvC to scan DNA until it finds its consensus sequence, where it cleaves and resolves the cruciform DNA. The protein is Holliday junction branch migration complex subunit RuvA of Bordetella avium (strain 197N).